Reading from the N-terminus, the 631-residue chain is ATP-dependent RNA helicase mrh4, mitochondrial (631 aa).

The N-terminal 45 residues, 1–45, are a transit peptide targeting the mitochondrion; the sequence is MNRLGRLPLPLPPSVCLFCRFRATASLPSSLQATRSMATARLRRR. The interval 68-112 is disordered; it reads KERFGPFAGMNQTEARIRETPRARSRAAQKRSGEPEEDSQKESPL. Residues 98-108 are compositionally biased toward basic and acidic residues; sequence RSGEPEEDSQK. Positions 141–174 match the Q motif motif; the sequence is TSFDQFQLLPVVRNSISSQALPGLVDVTPTPIQR. A compositionally biased stretch (basic and acidic residues) spans 180–193; the sequence is LLEEPKTEKKPTKA. The interval 180–199 is disordered; it reads LLEEPKTEKKPTKADDDEPR. Residues 194 to 406 form the Helicase ATP-binding domain; the sequence is DDDEPRYDQY…RKRYPDIKRL (213 aa). 207 to 214 contributes to the ATP binding site; it reads AETGSGKT. Positions 229–249 are disordered; it reads EARDKELEKKEQEEKAREREE. Positions 353-356 match the DEAD box motif; that stretch reads DEAD. The Helicase C-terminal domain maps to 455–631; that stretch reads GPYASYVAPK…EGMFRGQALI (177 aa).

The protein belongs to the DEAD box helicase family. MRH4 subfamily.

Its subcellular location is the mitochondrion. It catalyses the reaction ATP + H2O = ADP + phosphate + H(+). In terms of biological role, ATP-binding RNA helicase involved in mitochondrial RNA metabolism. Required for maintenance of mitochondrial DNA. This is ATP-dependent RNA helicase mrh4, mitochondrial (mrh4) from Aspergillus fumigatus (strain ATCC MYA-4609 / CBS 101355 / FGSC A1100 / Af293) (Neosartorya fumigata).